Here is a 306-residue protein sequence, read N- to C-terminus: Protein FdhE homolog (306 aa).

The protein belongs to the FdhE family.

The protein localises to the cytoplasm. Functionally, necessary for formate dehydrogenase activity. In Glaesserella parasuis serovar 5 (strain SH0165) (Haemophilus parasuis), this protein is Protein FdhE homolog.